Consider the following 68-residue polypeptide: Molybdenum-pterin-binding protein 1 (68 aa).

The Mop domain maps to 2–68; it reads SISARNQLKG…IKSTDVMILA (67 aa).

In terms of biological role, binds one mole of molybdenum per mole of protein and contains a pterin. In Clostridium pasteurianum, this protein is Molybdenum-pterin-binding protein 1 (mopI).